The following is a 522-amino-acid chain: Cytochrome P450 4e5, mitochondrial (522 aa).

Heme-binding residues include E307 and C443.

This sequence belongs to the cytochrome P450 family. Heme is required as a cofactor.

It is found in the mitochondrion. Probably involved in steroid hormones biosynthesis. This Drosophila mettleri (Fruit fly) protein is Cytochrome P450 4e5, mitochondrial (Cyp4e5).